Here is a 97-residue protein sequence, read N- to C-terminus: Putative pterin-4-alpha-carbinolamine dehydratase (97 aa).

It belongs to the pterin-4-alpha-carbinolamine dehydratase family.

It catalyses the reaction (4aS,6R)-4a-hydroxy-L-erythro-5,6,7,8-tetrahydrobiopterin = (6R)-L-erythro-6,7-dihydrobiopterin + H2O. The polypeptide is Putative pterin-4-alpha-carbinolamine dehydratase (Ruegeria pomeroyi (strain ATCC 700808 / DSM 15171 / DSS-3) (Silicibacter pomeroyi)).